A 190-amino-acid chain; its full sequence is Holliday junction branch migration complex subunit RuvA (190 aa).

The segment at 1-64 is domain I; sequence MIGKLTGTLL…EDAQLLYGFG (64 aa). The interval 65 to 143 is domain II; sequence THSERQAFRE…ADTGAQSLFV (79 aa). Residues 144-148 are flexible linker; that stretch reads NNDQN. The domain III stretch occupies residues 148-190; it reads NDIVQALMALGYSDKDAAAALKKLPPDVGVTEGIKLALKALAK.

This sequence belongs to the RuvA family. In terms of assembly, homotetramer. Forms an RuvA(8)-RuvB(12)-Holliday junction (HJ) complex. HJ DNA is sandwiched between 2 RuvA tetramers; dsDNA enters through RuvA and exits via RuvB. An RuvB hexamer assembles on each DNA strand where it exits the tetramer. Each RuvB hexamer is contacted by two RuvA subunits (via domain III) on 2 adjacent RuvB subunits; this complex drives branch migration. In the full resolvosome a probable DNA-RuvA(4)-RuvB(12)-RuvC(2) complex forms which resolves the HJ.

The protein resides in the cytoplasm. Its function is as follows. The RuvA-RuvB-RuvC complex processes Holliday junction (HJ) DNA during genetic recombination and DNA repair, while the RuvA-RuvB complex plays an important role in the rescue of blocked DNA replication forks via replication fork reversal (RFR). RuvA specifically binds to HJ cruciform DNA, conferring on it an open structure. The RuvB hexamer acts as an ATP-dependent pump, pulling dsDNA into and through the RuvAB complex. HJ branch migration allows RuvC to scan DNA until it finds its consensus sequence, where it cleaves and resolves the cruciform DNA. This Delftia acidovorans (strain DSM 14801 / SPH-1) protein is Holliday junction branch migration complex subunit RuvA.